We begin with the raw amino-acid sequence, 492 residues long: MEPQLAEFVLKEEMTCQCPKMSDGAYDMDVDQNYFEEEVRLASFANFPSSYPVSAPALARAGFYYTGDGDRVKCFSCLAMVEGWQHGDTAIGKHRKISPNCKFINGFNNLRSDCILTQVPVMQNGFQNSAEDLAERSSSEIMADYLLRTGRVVDMSTPKYPRHMEMCSEEARLQTFQNWPAYSPLTPKELANAGLFYTGINDQVKCFCCGGKLMNWEPSDKAWTEHKKHFPECYFVLGRDVGNVATEANTHGGRRRGSELACPAMNDYNARLETFSSWSFPIDKETLAKAGFYSIGDGDATKCFHCGGVLNCWSATDDPWEEHAKAYPGCKFLIDEKGQHFINHAQLKRPILHKANSADASPALPKDSNLLKSPLVTDAQQMGFPLEEIKKVMGQKLKTTGKNYTCVEEFVSDLCAQKETVLEKPKEIEISLEEKLRQLEEEKICKVCMDRRISIVFIPCGHLVACAVCADVLDKCPICCTIVERRQKIFMS.

BIR repeat units lie at residues 40–105 (RLAS…KFIN), 172–237 (RLQT…YFVL), and 271–334 (RLET…KFLI). Residues Cys303, Cys306, His323, and Cys330 each coordinate Zn(2+). The segment at 445-480 (CKVCMDRRISIVFIPCGHLVACAVCADVLDKCPICC) adopts an RING-type zinc-finger fold.

This sequence belongs to the IAP family. In terms of assembly, monomer, and homodimer. In terms of processing, degraded in a 2-step mechanism; a caspase-independent first step and a caspase-dependent second step. Stabilized indirectly by MAPK, which acts to delay caspase activation, rather than directly phosphorylating xiap.

It localises to the cytoplasm. It catalyses the reaction S-ubiquitinyl-[E2 ubiquitin-conjugating enzyme]-L-cysteine + [acceptor protein]-L-lysine = [E2 ubiquitin-conjugating enzyme]-L-cysteine + N(6)-ubiquitinyl-[acceptor protein]-L-lysine.. In terms of biological role, multi-functional protein which regulates not only caspases and apoptosis, but also acts as an E3 ubiquitin-protein ligase mediating ubiquitination and subsequent proteasomal degradation of its target proteins. Acts as a direct caspase inhibitor. E3 ubiquitin-protein ligase that acts as an important regulator of innate immunity by mediating 'Lys-63'-linked polyubiquitination of ripk2 downstream of NOD1 and NOD2, thereby transforming ripk2 into a scaffolding protein for downstream effectors, ultimately leading to activation of the NF-kappa-B and MAP kinases signaling. A key apoptotic suppressor in eggs. Acts as a positive regulator of Wnt signaling. The protein is E3 ubiquitin-protein ligase XIAP (xiap) of Xenopus tropicalis (Western clawed frog).